The primary structure comprises 579 residues: General transcriptional corepressor tupA (579 aa).

Over residues 83-101 the composition is skewed to polar residues; it reads NINASQRDLNSPSTFRSNS. Residues 83-258 form a disordered region; sequence NINASQRDLN…ENGKEKGTDW (176 aa). 3 stretches are compositionally biased toward low complexity: residues 109 to 128, 157 to 198, and 207 to 224; these read NNNN…NNNN, QQPG…LSPL, and MGNN…NNNN. Residues 227 to 256 show a composition bias toward basic and acidic residues; sequence KKPDMEEVKEEDRRRHDTEMSEENGKEKGT. 7 WD repeats span residues 279–319, 325–364, 367–406, 413–452, 455–494, 501–540, and 543–579; these read QHNS…HAFV, DGDL…IQHT, GHEL…CAFT, GPKN…FLER, GHLD…SRSR, GHKD…THMM, and GHKN…KYDS.

It belongs to the WD repeat TUP1 family. As to quaternary structure, associates with trfA to form the trfA-tupA corepressor complex.

The protein localises to the nucleus. Functionally, acts as a component of the trfA-tupA corepressor complex which is involved in the repression of many genes in a wide variety of physiological processes. May also be involved in the derepression of at least some target genes. The complex is recruited to target genes by interaction with DNA-bound transcriptional repressors. The complex recruits histone deacetylases to produce a repressive chromatin structure, interacts with hypoacetylated N-terminal tails of histones H3 and H4 that have been programmed for repression by the action of histone deacetylases and interferes directly with the transcriptional machinery by associating with the RNA polymerase II mediator complex. The sequence is that of General transcriptional corepressor tupA (tupA) from Dictyostelium discoideum (Social amoeba).